We begin with the raw amino-acid sequence, 101 residues long: MRRYEVNIVLNPNLDQSQLALEKEIIQRALENYGARVEKVEELGLRRLAYPIAKDPQGYFLWYQVEMPEDRVNDLARELRIRDNVRRVMVVKSQEPFLANA.

Belongs to the bacterial ribosomal protein bS6 family. In terms of assembly, part of the 30S ribosomal subunit. Forms a tight heterodimer with protein bS18.

Functionally, located on the outer edge of the platform on the body of the 30S subunit. The sequence is that of Small ribosomal subunit protein bS6 (rpsF) from Thermus thermophilus (strain ATCC BAA-163 / DSM 7039 / HB27).